Reading from the N-terminus, the 460-residue chain is Argininosuccinate lyase (460 aa).

This sequence belongs to the lyase 1 family. Argininosuccinate lyase subfamily.

Its subcellular location is the cytoplasm. The catalysed reaction is 2-(N(omega)-L-arginino)succinate = fumarate + L-arginine. It functions in the pathway amino-acid biosynthesis; L-arginine biosynthesis; L-arginine from L-ornithine and carbamoyl phosphate: step 3/3. In Campylobacter jejuni (strain RM1221), this protein is Argininosuccinate lyase.